A 104-amino-acid polypeptide reads, in one-letter code: ATP-dependent Clp protease adapter protein ClpS (104 aa).

It belongs to the ClpS family. In terms of assembly, binds to the N-terminal domain of the chaperone ClpA.

Its function is as follows. Involved in the modulation of the specificity of the ClpAP-mediated ATP-dependent protein degradation. This is ATP-dependent Clp protease adapter protein ClpS from Burkholderia mallei (strain NCTC 10247).